The sequence spans 101 residues: MAKKSMIARETKRAKTVEKYAAKRAELKAIINNHESSDDQIWEAQLKLQKLPRDASPSRQQRRCRITGRPHAVYRKFGLCRNKLREAAMRGDVPGLVKASW.

This sequence belongs to the universal ribosomal protein uS14 family. Part of the 30S ribosomal subunit. Contacts proteins S3 and S10.

Functionally, binds 16S rRNA, required for the assembly of 30S particles and may also be responsible for determining the conformation of the 16S rRNA at the A site. The polypeptide is Small ribosomal subunit protein uS14 (Saccharophagus degradans (strain 2-40 / ATCC 43961 / DSM 17024)).